A 468-amino-acid polypeptide reads, in one-letter code: uncharacterized protein (468 aa).

Coiled coils occupy residues Asn-10–Leu-94 and Phe-147–Ile-279. Residues Thr-324–Asp-369 are disordered. Ser-342 carries the post-translational modification Phosphoserine. Positions Val-399 to Glu-445 form a coiled coil.

It is found in the cytoplasm. This is an uncharacterized protein from Schizosaccharomyces pombe (strain 972 / ATCC 24843) (Fission yeast).